Here is a 477-residue protein sequence, read N- to C-terminus: Serine/threonine-protein kinase pakC (477 aa).

Residues 13-108 enclose the PH domain; that stretch reads SPDKEGELKK…WMKAVEKGSE (96 aa). Positions 112–125 constitute a CRIB domain; it reads VSQPFNLKHEVHVD. The Protein kinase domain maps to 204–458; that stretch reads YKNMTKIGEG…ATDLLKHPFM (255 aa). Residues 210–218 and K233 contribute to the ATP site; that span reads IGEGAAGEV. D326 (proton acceptor) is an active-site residue.

Belongs to the protein kinase superfamily. STE Ser/Thr protein kinase family. STE20 subfamily. Interacts with GTP-bound racB. Mg(2+) is required as a cofactor.

It localises to the cytoplasm. The protein localises to the membrane. It catalyses the reaction L-seryl-[protein] + ATP = O-phospho-L-seryl-[protein] + ADP + H(+). It carries out the reaction L-threonyl-[protein] + ATP = O-phospho-L-threonyl-[protein] + ADP + H(+). With respect to regulation, kinase activity is rapidly and transiently increased in response to chemoattractant stimulation. Functionally, has role in the regulation of chemotaxis. The polypeptide is Serine/threonine-protein kinase pakC (pakC) (Dictyostelium discoideum (Social amoeba)).